A 321-amino-acid polypeptide reads, in one-letter code: Methionyl-tRNA formyltransferase (321 aa).

Residue 111 to 114 (SLLP) participates in (6S)-5,6,7,8-tetrahydrofolate binding.

The protein belongs to the Fmt family.

It carries out the reaction L-methionyl-tRNA(fMet) + (6R)-10-formyltetrahydrofolate = N-formyl-L-methionyl-tRNA(fMet) + (6S)-5,6,7,8-tetrahydrofolate + H(+). Functionally, attaches a formyl group to the free amino group of methionyl-tRNA(fMet). The formyl group appears to play a dual role in the initiator identity of N-formylmethionyl-tRNA by promoting its recognition by IF2 and preventing the misappropriation of this tRNA by the elongation apparatus. This Bifidobacterium animalis subsp. lactis (strain AD011) protein is Methionyl-tRNA formyltransferase.